A 255-amino-acid polypeptide reads, in one-letter code: UDP-2,3-diacylglucosamine hydrolase (255 aa).

Mn(2+)-binding residues include Asp8, His10, Asp41, Asn79, and His114. Asn79–Arg80 contributes to the substrate binding site. The substrate site is built by Asp122, Ser160, Asn164, Lys167, and His195. Residues His195 and His197 each contribute to the Mn(2+) site.

This sequence belongs to the LpxH family. Mn(2+) is required as a cofactor.

The protein resides in the cell inner membrane. The catalysed reaction is UDP-2-N,3-O-bis[(3R)-3-hydroxytetradecanoyl]-alpha-D-glucosamine + H2O = 2-N,3-O-bis[(3R)-3-hydroxytetradecanoyl]-alpha-D-glucosaminyl 1-phosphate + UMP + 2 H(+). It participates in glycolipid biosynthesis; lipid IV(A) biosynthesis; lipid IV(A) from (3R)-3-hydroxytetradecanoyl-[acyl-carrier-protein] and UDP-N-acetyl-alpha-D-glucosamine: step 4/6. Functionally, hydrolyzes the pyrophosphate bond of UDP-2,3-diacylglucosamine to yield 2,3-diacylglucosamine 1-phosphate (lipid X) and UMP by catalyzing the attack of water at the alpha-P atom. Involved in the biosynthesis of lipid A, a phosphorylated glycolipid that anchors the lipopolysaccharide to the outer membrane of the cell. The chain is UDP-2,3-diacylglucosamine hydrolase from Hamiltonella defensa subsp. Acyrthosiphon pisum (strain 5AT).